The primary structure comprises 101 residues: MRFLVGAVLVVVLVACATAFESDAETFKSLVVEERKCHGDGSKGCATKPDDWCCKNTPCKCPAWSSTSECRCAMDCSRRCKGKRALLLPVETHRLLFPEQW.

The signal sequence occupies residues 1-19; sequence MRFLVGAVLVVVLVACATA. Positions 20 to 35 are excised as a propeptide; sequence FESDAETFKSLVVEER. Cystine bridges form between Cys-37/Cys-54, Cys-45/Cys-59, Cys-53/Cys-72, and Cys-61/Cys-70. Position 81 is a lysine amide (Lys-81). A propeptide spanning residues 85–101 is cleaved from the precursor; the sequence is ALLLPVETHRLLFPEQW.

Belongs to the neurotoxin 28 (Litx) family. In terms of tissue distribution, expressed by the venom gland.

Its subcellular location is the secreted. Its function is as follows. Toxin active against insects (S.frugiperda larvae). May act on sodium (Nav) or calcium channels (Cav). In Loxosceles intermedia (Brown spider), this protein is U1-sicaritoxin-Li1a.